Reading from the N-terminus, the 403-residue chain is GPI-N-acetylgalactosamine transferase PGAP4 (403 aa).

Residues 1-22 (MTTSTSPAAMLLRRLRRLSWGS) are Cytoplasmic-facing. Residues 23 to 43 (TAVQLFILTVVTFGLLAPLAC) form a helical membrane-spanning segment. Residues 44–264 (HRLLHSYFYL…INPEPMRILE (221 aa)) lie on the Lumenal side of the membrane. Val-109 is a binding site for UDP-N-acetyl-alpha-D-galactosamine. Intrachain disulfides connect Cys-132–Cys-136 and Cys-144–Cys-194. A DXD motif motif is present at residues 211-213 (EDD). A helical transmembrane segment spans residues 265 to 285 (WVGVGMLLGPVLTWIYMRFAC). The Cytoplasmic segment spans residues 286–287 (RP). A helical membrane pass occupies residues 288–308 (GFSWPVMLFFCLYSMGLVELV). At 309–403 (GRHYFLELRR…LRYNFHPSLL (95 aa)) the chain is on the lumenal side. A disulfide bridge connects residues Cys-332 and Cys-333. UDP-N-acetyl-alpha-D-galactosamine-binding residues include Thr-334, Pro-335, and Lys-362.

The protein belongs to the PGAP4 family. Glycosylated.

It localises to the golgi apparatus membrane. Its function is as follows. Golgi-resident glycosylphosphatidylinositol (GPI)-N-acetylgalactosamine transferase that catalyzes the N-acetyl-beta-D-galactosamine transfer from an UDP-N-acetyl-alpha-D-galactosamine to the 4-OH-position of first mannose of the glycosylphosphatidylinositol (GPI) of a GPI-anchored protein (GPI-AP). This modification occurs after the fatty acid remodeling step of the GPI-anchor maturation. The polypeptide is GPI-N-acetylgalactosamine transferase PGAP4 (Mus musculus (Mouse)).